The primary structure comprises 511 residues: Ribosome biogenesis protein YTM1 (511 aa).

The ubiquitin-like (UBL) domain stretch occupies residues 9 to 112 (VKVVFVTRDE…EVSLSIEYIR (104 aa)). A sufficient for interaction with ERB1 and association with 66S pre-ribosomes region spans residues 122-511 (SFSNPDWVAA…IQINNNPQSA (390 aa)). WD repeat units lie at residues 124–168 (SNPD…TGQL), 170–208 (GHNS…YRRK), 248–287 (GHTA…MPAI), 332–372 (GHSA…AVQS), 383–423 (TRST…QVAT), 429–470 (GHTN…SLHV), and 477–511 (TENN…PQSA). A disordered region spans residues 207 to 228 (RKEPGQVGKKELNYDSEEDSDE). The span at 208–219 (KEPGQVGKKELN) shows a compositional bias: basic and acidic residues.

This sequence belongs to the WD repeat WDR12/YTM1 family. As to quaternary structure, component of the NOP7 complex, composed of ERB1, NOP7 and YTM1. The complex is held together by ERB1, which interacts with NOP7 via its N-terminal domain and with YTM1 via a high-affinity interaction between the seven-bladed beta-propeller domains of the 2 proteins. The NOP7 complex associates with the 66S pre-ribosome. Interacts (via UBL domain) with MDN1 (via VWFA/MIDAS domain).

The protein resides in the nucleus. The protein localises to the nucleolus. Its subcellular location is the nucleoplasm. Functionally, component of the NOP7 complex, which is required for maturation of the 25S and 5.8S ribosomal RNAs and formation of the 60S ribosome. The chain is Ribosome biogenesis protein YTM1 from Yarrowia lipolytica (strain CLIB 122 / E 150) (Yeast).